Consider the following 490-residue polypeptide: UDP-N-acetylmuramyl-tripeptide synthetase (490 aa).

113–119 (GTDGKTT) contributes to the ATP binding site. UDP-N-acetyl-alpha-D-muramoyl-L-alanyl-D-glutamate contacts are provided by residues 158-159 (TT), Ser-185, and Arg-193. Lys-225 is subject to N6-carboxylysine.

The protein belongs to the MurCDEF family. MurE subfamily. Post-translationally, carboxylation is probably crucial for Mg(2+) binding and, consequently, for the gamma-phosphate positioning of ATP.

It localises to the cytoplasm. Its pathway is cell wall biogenesis; peptidoglycan biosynthesis. In terms of biological role, catalyzes the addition of an amino acid to the nucleotide precursor UDP-N-acetylmuramoyl-L-alanyl-D-glutamate (UMAG) in the biosynthesis of bacterial cell-wall peptidoglycan. The chain is UDP-N-acetylmuramyl-tripeptide synthetase from Deinococcus radiodurans (strain ATCC 13939 / DSM 20539 / JCM 16871 / CCUG 27074 / LMG 4051 / NBRC 15346 / NCIMB 9279 / VKM B-1422 / R1).